We begin with the raw amino-acid sequence, 434 residues long: ATP-dependent protease ATPase subunit HslU (434 aa).

ATP is bound by residues Val-18, Gly-60 to Glu-65, Asp-247, Glu-312, and Arg-384.

The protein belongs to the ClpX chaperone family. HslU subfamily. As to quaternary structure, a double ring-shaped homohexamer of HslV is capped on each side by a ring-shaped HslU homohexamer. The assembly of the HslU/HslV complex is dependent on binding of ATP.

The protein resides in the cytoplasm. ATPase subunit of a proteasome-like degradation complex; this subunit has chaperone activity. The binding of ATP and its subsequent hydrolysis by HslU are essential for unfolding of protein substrates subsequently hydrolyzed by HslV. HslU recognizes the N-terminal part of its protein substrates and unfolds these before they are guided to HslV for hydrolysis. This Bradyrhizobium diazoefficiens (strain JCM 10833 / BCRC 13528 / IAM 13628 / NBRC 14792 / USDA 110) protein is ATP-dependent protease ATPase subunit HslU.